The chain runs to 459 residues: Arginine biosynthesis bifunctional protein ArgJ, mitochondrial (459 aa).

Substrate is bound by residues T187, K216, T227, E314, N454, and T459. T227 functions as the Nucleophile in the catalytic mechanism.

It belongs to the ArgJ family. Heterodimer of an alpha and a beta chain. In terms of processing, the alpha and beta chains are autoproteolytically processed from a single precursor protein within the mitochondrion.

It localises to the mitochondrion matrix. The enzyme catalyses N(2)-acetyl-L-ornithine + L-glutamate = N-acetyl-L-glutamate + L-ornithine. The catalysed reaction is L-glutamate + acetyl-CoA = N-acetyl-L-glutamate + CoA + H(+). It participates in amino-acid biosynthesis; L-arginine biosynthesis; L-ornithine and N-acetyl-L-glutamate from L-glutamate and N(2)-acetyl-L-ornithine (cyclic): step 1/1. It functions in the pathway amino-acid biosynthesis; L-arginine biosynthesis; N(2)-acetyl-L-ornithine from L-glutamate: step 1/4. In terms of biological role, catalyzes two activities which are involved in the cyclic version of arginine biosynthesis: the synthesis of acetylglutamate from glutamate and acetyl-CoA, and of ornithine by transacetylation between acetylornithine and glutamate. This chain is Arginine biosynthesis bifunctional protein ArgJ, mitochondrial, found in Uncinocarpus reesii (strain UAMH 1704).